Here is a 242-residue protein sequence, read N- to C-terminus: Pyridoxine 5'-phosphate synthase (242 aa).

Position 6 (Asn-6) interacts with 3-amino-2-oxopropyl phosphate. Asp-8–His-9 lines the 1-deoxy-D-xylulose 5-phosphate pocket. A 3-amino-2-oxopropyl phosphate-binding site is contributed by Arg-17. His-42 acts as the Proton acceptor in catalysis. Positions 44 and 49 each coordinate 1-deoxy-D-xylulose 5-phosphate. The active-site Proton acceptor is the Glu-69. Thr-99 contributes to the 1-deoxy-D-xylulose 5-phosphate binding site. The active-site Proton donor is the His-190. 3-amino-2-oxopropyl phosphate contacts are provided by residues Gly-191 and Gly-212–His-213.

This sequence belongs to the PNP synthase family. Homooctamer; tetramer of dimers.

It is found in the cytoplasm. The enzyme catalyses 3-amino-2-oxopropyl phosphate + 1-deoxy-D-xylulose 5-phosphate = pyridoxine 5'-phosphate + phosphate + 2 H2O + H(+). The protein operates within cofactor biosynthesis; pyridoxine 5'-phosphate biosynthesis; pyridoxine 5'-phosphate from D-erythrose 4-phosphate: step 5/5. Its function is as follows. Catalyzes the complicated ring closure reaction between the two acyclic compounds 1-deoxy-D-xylulose-5-phosphate (DXP) and 3-amino-2-oxopropyl phosphate (1-amino-acetone-3-phosphate or AAP) to form pyridoxine 5'-phosphate (PNP) and inorganic phosphate. This is Pyridoxine 5'-phosphate synthase from Neisseria meningitidis serogroup A / serotype 4A (strain DSM 15465 / Z2491).